Reading from the N-terminus, the 198-residue chain is Outer-membrane lipoprotein carrier protein (198 aa).

The signal sequence occupies residues M1–A16.

This sequence belongs to the LolA family. As to quaternary structure, monomer.

It localises to the periplasm. Participates in the translocation of lipoproteins from the inner membrane to the outer membrane. Only forms a complex with a lipoprotein if the residue after the N-terminal Cys is not an aspartate (The Asp acts as a targeting signal to indicate that the lipoprotein should stay in the inner membrane). This Vibrio vulnificus (strain YJ016) protein is Outer-membrane lipoprotein carrier protein.